The sequence spans 291 residues: 3-hydroxy-5-phosphonooxypentane-2,4-dione thiolase (291 aa).

The active-site Schiff-base intermediate with substrate is Lys-203.

The protein belongs to the DeoC/FbaB aldolase family. Homodecamer.

The protein resides in the cytoplasm. The catalysed reaction is dihydroxyacetone phosphate + acetyl-CoA = 3-hydroxy-2,4-dioxopentyl phosphate + CoA. Functionally, involved in the degradation of phospho-AI-2, thereby terminating induction of the lsr operon and closing the AI-2 signaling cycle. Catalyzes the transfer of an acetyl moiety from 3-hydroxy-5-phosphonooxypentane-2,4-dione to CoA to form glycerone phosphate and acetyl-CoA. This is 3-hydroxy-5-phosphonooxypentane-2,4-dione thiolase from Yersinia enterocolitica serotype O:8 / biotype 1B (strain NCTC 13174 / 8081).